A 366-amino-acid polypeptide reads, in one-letter code: tRNA/tmRNA (uracil-C(5))-methyltransferase (366 aa).

Residues Q189, Y217, N222, E238, and D298 each contribute to the S-adenosyl-L-methionine site. The Nucleophile role is filled by C323. The active-site Proton acceptor is the E357.

It belongs to the class I-like SAM-binding methyltransferase superfamily. RNA M5U methyltransferase family. TrmA subfamily.

It catalyses the reaction uridine(54) in tRNA + S-adenosyl-L-methionine = 5-methyluridine(54) in tRNA + S-adenosyl-L-homocysteine + H(+). It carries out the reaction uridine(341) in tmRNA + S-adenosyl-L-methionine = 5-methyluridine(341) in tmRNA + S-adenosyl-L-homocysteine + H(+). In terms of biological role, dual-specificity methyltransferase that catalyzes the formation of 5-methyluridine at position 54 (m5U54) in all tRNAs, and that of position 341 (m5U341) in tmRNA (transfer-mRNA). The polypeptide is tRNA/tmRNA (uracil-C(5))-methyltransferase (Shewanella oneidensis (strain ATCC 700550 / JCM 31522 / CIP 106686 / LMG 19005 / NCIMB 14063 / MR-1)).